A 373-amino-acid chain; its full sequence is Glutamate 5-kinase (373 aa).

Residue Lys15 coordinates ATP. Residues Ser55, Asp142, and Asn154 each contribute to the substrate site. Residues Thr174–Asp175 and Thr216–Lys222 each bind ATP. The region spanning Ser281–Lys359 is the PUA domain.

It belongs to the glutamate 5-kinase family.

The protein resides in the cytoplasm. It carries out the reaction L-glutamate + ATP = L-glutamyl 5-phosphate + ADP. Its pathway is amino-acid biosynthesis; L-proline biosynthesis; L-glutamate 5-semialdehyde from L-glutamate: step 1/2. Its function is as follows. Catalyzes the transfer of a phosphate group to glutamate to form L-glutamate 5-phosphate. This chain is Glutamate 5-kinase, found in Geobacter metallireducens (strain ATCC 53774 / DSM 7210 / GS-15).